Reading from the N-terminus, the 542-residue chain is Hydroxylamine reductase (542 aa).

Cysteine 5, cysteine 8, cysteine 17, and cysteine 23 together coordinate [4Fe-4S] cluster. Hybrid [4Fe-2O-2S] cluster-binding residues include histidine 237, glutamate 261, cysteine 305, cysteine 397, cysteine 425, cysteine 450, glutamate 485, and lysine 487. Residue cysteine 397 is modified to Cysteine persulfide.

It belongs to the HCP family. It depends on [4Fe-4S] cluster as a cofactor. The cofactor is hybrid [4Fe-2O-2S] cluster.

It localises to the cytoplasm. The catalysed reaction is A + NH4(+) + H2O = hydroxylamine + AH2 + H(+). Its function is as follows. Catalyzes the reduction of hydroxylamine to form NH(3) and H(2)O. This Acetivibrio thermocellus (strain ATCC 27405 / DSM 1237 / JCM 9322 / NBRC 103400 / NCIMB 10682 / NRRL B-4536 / VPI 7372) (Clostridium thermocellum) protein is Hydroxylamine reductase.